A 394-amino-acid chain; its full sequence is Acetate kinase (394 aa).

Asparagine 8 lines the Mg(2+) pocket. Lysine 15 lines the ATP pocket. Arginine 86 is a binding site for substrate. The Proton donor/acceptor role is filled by aspartate 143. ATP-binding positions include 201–205, 276–278, and 324–328; these read HLGNG, DCR, and GIGEN. Glutamate 378 is a Mg(2+) binding site.

It belongs to the acetokinase family. As to quaternary structure, homodimer. Mg(2+) serves as cofactor. Requires Mn(2+) as cofactor.

Its subcellular location is the cytoplasm. The catalysed reaction is acetate + ATP = acetyl phosphate + ADP. Its pathway is metabolic intermediate biosynthesis; acetyl-CoA biosynthesis; acetyl-CoA from acetate: step 1/2. Functionally, catalyzes the formation of acetyl phosphate from acetate and ATP. Can also catalyze the reverse reaction. This is Acetate kinase from Dichelobacter nodosus (strain VCS1703A).